A 117-amino-acid chain; its full sequence is Spanin, inner membrane subunit (117 aa).

Residues 1–2 are Cytoplasmic-facing; it reads MH. The chain crosses the membrane as a helical; Signal-anchor for type II membrane protein span at residues 3–23; that stretch reads VSNFTAGLLLLVIAFGGTSII. Residues 24-93 are a coiled coil; sequence LKHKVERLET…AKKADVVAHK (70 aa). Over 24–117 the chain is Periplasmic; the sequence is LKHKVERLET…FAEDIQDLSK (94 aa).

In terms of assembly, interacts (via C-terminus) with the spanin outer lipoprotein subunit (via C-terminus). Part of the spanin complex which spans the entire periplasmic space. The spanin complex is composed of spanin inner membrane subunit and spanin outer membrane subunit.

Its subcellular location is the host cell inner membrane. Its function is as follows. Component of the spanin complex that disrupts the host outer membrane and participates in cell lysis during virus exit. The spanin complex conducts the final step in host lysis by disrupting the outer membrane after holin and endolysin action have permeabilized the inner membrane and degraded the host peptidoglycans. Host outer membrane disruption is possibly due to local fusion between the inner and outer membrane performed by the spanin complex. The chain is Spanin, inner membrane subunit (y13K) from Enterobacteria phage T4 (Bacteriophage T4).